The following is a 103-amino-acid chain: MSLLEQVSVSKKANIYFDGKVASRSVFLADGSKQTLGVVLPGEYEFSTSQGEVMEVTSGRFEVLLPESTLWQEFSEGTQFELAANVSFKIRNTAIAEYCCSYL.

This sequence belongs to the nucleoside phosphorylase PpnP family.

It carries out the reaction a purine D-ribonucleoside + phosphate = a purine nucleobase + alpha-D-ribose 1-phosphate. The catalysed reaction is adenosine + phosphate = alpha-D-ribose 1-phosphate + adenine. The enzyme catalyses cytidine + phosphate = cytosine + alpha-D-ribose 1-phosphate. It catalyses the reaction guanosine + phosphate = alpha-D-ribose 1-phosphate + guanine. It carries out the reaction inosine + phosphate = alpha-D-ribose 1-phosphate + hypoxanthine. The catalysed reaction is thymidine + phosphate = 2-deoxy-alpha-D-ribose 1-phosphate + thymine. The enzyme catalyses uridine + phosphate = alpha-D-ribose 1-phosphate + uracil. It catalyses the reaction xanthosine + phosphate = alpha-D-ribose 1-phosphate + xanthine. In terms of biological role, catalyzes the phosphorolysis of diverse nucleosides, yielding D-ribose 1-phosphate and the respective free bases. Can use uridine, adenosine, guanosine, cytidine, thymidine, inosine and xanthosine as substrates. Also catalyzes the reverse reactions. The polypeptide is Pyrimidine/purine nucleoside phosphorylase (Shewanella putrefaciens (strain CN-32 / ATCC BAA-453)).